The following is a 348-amino-acid chain: RNA 3'-terminal phosphate cyclase (348 aa).

ATP is bound by residues Q101 and 286 to 289; that span reads HMAD. The active-site Tele-AMP-histidine intermediate is H312.

The protein belongs to the RNA 3'-terminal cyclase family. Type 1 subfamily.

The protein resides in the cytoplasm. It carries out the reaction a 3'-end 3'-phospho-ribonucleotide-RNA + ATP = a 3'-end 2',3'-cyclophospho-ribonucleotide-RNA + AMP + diphosphate. Its function is as follows. Catalyzes the conversion of 3'-phosphate to a 2',3'-cyclic phosphodiester at the end of RNA. The mechanism of action of the enzyme occurs in 3 steps: (A) adenylation of the enzyme by ATP; (B) transfer of adenylate to an RNA-N3'P to produce RNA-N3'PP5'A; (C) and attack of the adjacent 2'-hydroxyl on the 3'-phosphorus in the diester linkage to produce the cyclic end product. The biological role of this enzyme is unknown but it is likely to function in some aspects of cellular RNA processing. The polypeptide is RNA 3'-terminal phosphate cyclase (Pyrobaculum aerophilum (strain ATCC 51768 / DSM 7523 / JCM 9630 / CIP 104966 / NBRC 100827 / IM2)).